Here is a 248-residue protein sequence, read N- to C-terminus: tRNA (guanine-N(7)-)-methyltransferase (248 aa).

S-adenosyl-L-methionine is bound by residues glycine 70, glutamate 93–isoleucine 94, asparagine 129–alanine 130, and leucine 149. Aspartate 152 is an active-site residue. Serine 227–glutamate 229 is an S-adenosyl-L-methionine binding site.

This sequence belongs to the class I-like SAM-binding methyltransferase superfamily. TrmB family.

The protein resides in the nucleus. The enzyme catalyses guanosine(46) in tRNA + S-adenosyl-L-methionine = N(7)-methylguanosine(46) in tRNA + S-adenosyl-L-homocysteine. It functions in the pathway tRNA modification; N(7)-methylguanine-tRNA biosynthesis. Catalyzes the formation of N(7)-methylguanine at position 46 (m7G46) in tRNA. This Drosophila mojavensis (Fruit fly) protein is tRNA (guanine-N(7)-)-methyltransferase.